Reading from the N-terminus, the 168-residue chain is Pollen allergen Cro s 1 (168 aa).

The first 26 residues, 1-26 (MGKCQAVFLLVGALCVLSLAGVANAA), serve as a signal peptide directing secretion. Disulfide bonds link C38–C109, C41–C153, and C62–C97. Residue N64 is glycosylated (N-linked (GlcNAc...) asparagine).

This sequence belongs to the Ole e I family. Expressed in pollen.

It is found in the secreted. The sequence is that of Pollen allergen Cro s 1 from Crocus sativus (Saffron).